The following is a 131-amino-acid chain: Fumarate reductase subunit C (131 aa).

Helical transmembrane passes span 30–50 (EGTAVPAVWFSIELIFGLFAL), 63–83 (FLQNPVIVIINLITLAAALLH), and 109–129 (IIKSLWAVTVVATIVILFVAL).

The protein belongs to the FrdC family. As to quaternary structure, part of an enzyme complex containing four subunits: a flavoprotein (FrdA), an iron-sulfur protein (FrdB), and two hydrophobic anchor proteins (FrdC and FrdD).

The protein resides in the cell inner membrane. Its function is as follows. Two distinct, membrane-bound, FAD-containing enzymes are responsible for the catalysis of fumarate and succinate interconversion; fumarate reductase is used in anaerobic growth, and succinate dehydrogenase is used in aerobic growth. Anchors the catalytic components of the fumarate reductase complex to the cell inner membrane, binds quinones. This is Fumarate reductase subunit C from Escherichia coli O17:K52:H18 (strain UMN026 / ExPEC).